Here is an 830-residue protein sequence, read N- to C-terminus: Formin-like protein 14 (830 aa).

The signal sequence occupies residues 1–34; the sequence is MAMAMAMPSSSPPLFFSLLNLMLLLLLLAPYCSA. A compositionally biased stretch (polar residues) spans 40–59; that stretch reads NNTHHRSSSPTQTTLQQLHS. The segment at 40–195 is disordered; sequence NNTHHRSSSP…NISTLVHPTQ (156 aa). 2 stretches are compositionally biased toward pro residues: residues 61-86 and 95-135; these read DSPP…PAPR and PPPP…PTPK. Low complexity predominate over residues 149–160; it reads YPFTNYPFFPNF. The chain crosses the membrane as a helical span at residues 203–223; that stretch reads VLQALLLSFLSLCLLLLSALL. The segment at 235 to 446 is disordered; it reads HHSHSHPNAR…LHSDKLKPGS (212 aa). Positions 314–323 are enriched in pro residues; that stretch reads RPLPPLPRVG. The span at 324 to 369 shows a compositional bias: low complexity; the sequence is PPSGEFASRSSASDPSTAPPAAAEASSSSLSPSSPSASSPTLGSSP. Residues 390–823 form the FH2 domain; that stretch reads PKRRPQPPEP…MMGRDWNMAA (434 aa). A compositionally biased stretch (basic and acidic residues) spans 424 to 446; sequence HSPSEKSMRKSRPLHSDKLKPGS.

The protein belongs to the formin-like family. Class-I subfamily.

The protein localises to the membrane. This chain is Formin-like protein 14 (FH14), found in Oryza sativa subsp. japonica (Rice).